A 332-amino-acid chain; its full sequence is Melanocortin receptor 4 (332 aa).

The Extracellular segment spans residues 1-43 (MNSTHHHGMYTSLHLWNRSSHGLHGNASESLGKGHSDGGCYEQ). N-linked (GlcNAc...) asparagine glycosylation is found at Asn-2, Asn-17, and Asn-26. Disulfide bonds link Cys-40-Cys-279 and Cys-271-Cys-277. The chain crosses the membrane as a helical span at residues 44–69 (LFVSPEVFVTLGVISLLENILVIVAI). Residues 70–81 (AKNKNLHSPMYF) lie on the Cytoplasmic side of the membrane. Residues 82-106 (FICSLAVADMLVSVSNGSETIVITL) traverse the membrane as a helical segment. Residues Glu-100, Asp-122, and Asp-126 each contribute to the Ca(2+) site. Residues 107-123 (LNSTDTDAQSFTVNIDN) lie on the Extracellular side of the membrane. Residues 124-145 (VIDSVICSSLLASICSLLSIAV) form a helical membrane-spanning segment. Residues 146–165 (DRYFTIFYALQYHNIMTVRR) are Cytoplasmic-facing. Residues 166 to 186 (VGIIISCIWAACTVSGVLFII) traverse the membrane as a helical segment. At 187 to 191 (YSDSS) the chain is on the extracellular side. The chain crosses the membrane as a helical span at residues 192 to 215 (AVIICLITMFFTMLVLMASLYVHM). Residues 216–248 (FLMARLHIKRIAVLPGTGTIRQGANMKGAITLT) lie on the Cytoplasmic side of the membrane. Residues 249–271 (ILIGVFVVCWAPFFLHLLFYISC) traverse the membrane as a helical segment. At 272–280 (PQNPYCVCF) the chain is on the extracellular side. The chain crosses the membrane as a helical span at residues 281-304 (MSHFNLYLILIMCNAVIDPLIYAL). The Cytoplasmic portion of the chain corresponds to 305-332 (RSQELRKTFKEIICFYPLGGICELPGRY). The S-palmitoyl cysteine moiety is linked to residue Cys-318.

The protein belongs to the G-protein coupled receptor 1 family. In terms of assembly, homodimer; disulfide-linked, also forms higher order oligomers. Interacts with GNAS. Interacts with ATRNL1. Interacts with MGRN1; this interaction competes with GNAS-binding and thus inhibits agonist-induced cAMP production. Interacts with MRAP and MRAP2; these associated factors increase ligand-sensitivity and generation of cAMP. Brain, enriched in the striatum, nucleus accumbens, and periaqueductal gray.

It is found in the cell membrane. In terms of biological role, hormone receptor that acts as a key component of the leptin-melanocortin pathway at the intersection of homeostatic maintenance of energetic state. Plays a role in regulating food intake: activation by a stimulating hormone such as anorexigenic alpha-melanocyte stimulating hormone (alpha-MSH) inhibits appetite, whereas binding to a natural antagonist like Agouti-related protein/AGRP promotes appetite. G-protein-coupled receptor that activates conventional Galphas signaling leading to induction of anorexogenic signaling in the hypothalamus to result in negative energy balance. Regulates the firing activity of neurons from the hypothalamus by alpha-MSH and AGRP independently of Galphas signaling by ligand-induced coupling of closure of inwardly rectifying potassium channel KCNJ13. In intestinal epithelial cells, plays a role in the inhibition of hepatic glucose production via nesfatin-1/NUCB2 leading to increased cyclic adenosine monophosphate (cAMP) levels and glucagon-like peptide 1 (GLP-1) secretion in the intestinal epithelium. This chain is Melanocortin receptor 4 (Mc4r), found in Rattus norvegicus (Rat).